Reading from the N-terminus, the 212-residue chain is Cytidylate kinase (212 aa).

7-15 (GPAASGKGT) contacts ATP.

The protein belongs to the cytidylate kinase family. Type 1 subfamily.

It is found in the cytoplasm. It carries out the reaction CMP + ATP = CDP + ADP. The enzyme catalyses dCMP + ATP = dCDP + ADP. The chain is Cytidylate kinase from Rhodopseudomonas palustris (strain BisB18).